Here is a 357-residue protein sequence, read N- to C-terminus: CRISPR system Cms protein Csm5 (357 aa).

It belongs to the CRISPR-associated Csm5 family. Part of the Csm effector complex that includes at least Cas10(1), Csm2(3), Csm3(5), Csm4(1), Csm5(1) and mature crRNA. The Csm complex is elongated and slightly twisted with a maximal length of 215 Angstroms and a diameter of 75-80 Angstroms. It has been modeled to have a central protein filamant of Csm3 subunits along which the dsRNA helix of paired crRNA and target RNA binds. The filament is capped at one end by Cas10 and Csm4 and at the other end by Csm5; ssDNA is thought to bind to the N-terminal HD domain of Cas10. Csm with a precursor crRNA does not include Csm5, while Cas6, the enzyme probably involved in pre-crRNA processing, is found associated with a subset of the Csm complex.

CRISPR (clustered regularly interspaced short palindromic repeat) is an adaptive immune system that provides protection against mobile genetic elements (viruses, transposable elements and conjugative plasmids). CRISPR clusters contain spacers, sequences complementary to antecedent mobile elements, and target invading nucleic acids. CRISPR clusters are transcribed and processed into CRISPR RNA (crRNA). The type III-A Csm effector complex binds crRNA and acts as a crRNA-guided RNase, DNase and cyclic oligoadenylate synthase; binding of target RNA cognate to the crRNA is required for all activities. In a heterologous host this Csm effector complex restricts ssRNA phage MS2, suggesting it may target RNA viruses in vivo. In terms of biological role, csm functions as a non-specific ssDNase. Base-pairing between crRNA and target RNA to form a ternary Csm complex activates a ssDNase activity; target RNA cleavage suppresses the ssDNase, a temporal control that prevents uncontrolled DNA degradation. Viral RNA transcripts probably tether the Csm complex to the viral genome, recruiting Cas10 ssDNA activity which is able to degrade DNA in the transcription bubble, spatially controlling the DNase activity. Functionally, this subunit might be involved in maturation of a crRNA intermediate to its mature form. This is CRISPR system Cms protein Csm5 from Streptococcus thermophilus.